The primary structure comprises 341 residues: MYTLARQLLFKLSPETSHDLSLDLIGAGGRLGLNGVLCKQPAALPVSVMGLNFANPVGLAAGLDKNGAAIDGFAQLGFGFVEIGTVTPRAQPGNPKPRLFRLPEATAIINRMGFNNLGVDHLLERVRAARYDGVLGINIGKNFDTPVERAVDDYLICLNKVYGHASYITVNISSPNTPGLRSLQFGDSLKQLLDALAERREQLAGEHGKRVPLAIKIAPDMSDEETALVAATLMESGMDAVIATNTTMGREGVENLPYGGEAGGLSGAPVLEKSTHIVKVLSAELGGKMPIIAAGGITEGRHAAEKIAAGASLVQIYSGFIYRGPALIREAVDAIAAMPRA.

FMN contacts are provided by residues 61-65 and Thr-85; that span reads AGLDK. Lys-65 contributes to the substrate binding site. 110–114 is a substrate binding site; sequence NRMGF. Asn-138 and Asn-171 together coordinate FMN. Asn-171 contributes to the substrate binding site. The active-site Nucleophile is Ser-174. Asn-176 contacts substrate. Lys-216 and Thr-244 together coordinate FMN. 245 to 246 is a binding site for substrate; the sequence is NT. Residues Gly-267, Gly-296, and 317-318 contribute to the FMN site; that span reads YS.

It belongs to the dihydroorotate dehydrogenase family. Type 2 subfamily. As to quaternary structure, monomer. Requires FMN as cofactor.

The protein resides in the cell membrane. It carries out the reaction (S)-dihydroorotate + a quinone = orotate + a quinol. It functions in the pathway pyrimidine metabolism; UMP biosynthesis via de novo pathway; orotate from (S)-dihydroorotate (quinone route): step 1/1. Functionally, catalyzes the conversion of dihydroorotate to orotate with quinone as electron acceptor. This is Dihydroorotate dehydrogenase (quinone) from Pseudomonas putida (strain W619).